We begin with the raw amino-acid sequence, 609 residues long: Elongation factor 4 (609 aa).

The region spanning 11–193 (SRIRNFSIIA…QIVEKVPAPS (183 aa)) is the tr-type G domain. Residues 23 to 28 (DHGKST) and 140 to 143 (NKID) contribute to the GTP site.

It belongs to the TRAFAC class translation factor GTPase superfamily. Classic translation factor GTPase family. LepA subfamily.

It is found in the cell membrane. It catalyses the reaction GTP + H2O = GDP + phosphate + H(+). Functionally, required for accurate and efficient protein synthesis under certain stress conditions. May act as a fidelity factor of the translation reaction, by catalyzing a one-codon backward translocation of tRNAs on improperly translocated ribosomes. Back-translocation proceeds from a post-translocation (POST) complex to a pre-translocation (PRE) complex, thus giving elongation factor G a second chance to translocate the tRNAs correctly. Binds to ribosomes in a GTP-dependent manner. This is Elongation factor 4 from Halalkalibacterium halodurans (strain ATCC BAA-125 / DSM 18197 / FERM 7344 / JCM 9153 / C-125) (Bacillus halodurans).